We begin with the raw amino-acid sequence, 510 residues long: Cytochrome P450 94B1 (510 aa).

Residues 3–23 (MLNAIILILFPIIGFVLIFSF) traverse the membrane as a helical segment. Cys450 contributes to the heme binding site.

Belongs to the cytochrome P450 family. It depends on heme as a cofactor.

It localises to the membrane. It carries out the reaction a jasmonyl-L-amino acid + reduced [NADPH--hemoprotein reductase] + O2 = a 12-hydroxyjasmonyl-L-alpha-amino acid + oxidized [NADPH--hemoprotein reductase] + H2O + H(+). Its function is as follows. Hydroxylase involved in the oxidation of the plant hormone jasmonoyl-L-isoleucine (JA-Ile), a bioactive phytohormone of the jasmonate-mediated signaling pathway. Converts JA-Ile to 12-hydroxy-JA-Ile. The polypeptide is Cytochrome P450 94B1 (Arabidopsis thaliana (Mouse-ear cress)).